Reading from the N-terminus, the 809-residue chain is PiggyBac transposable element-derived protein 1 (809 aa).

Residues 44-126 (RLRFRHFCYQ…TVLENLETGS (83 aa)) enclose the SCAN box domain. A disordered region spans residues 170 to 199 (CEPPQRPQGNPQEVSGPVPHGSAHLQEKNP). Lys218 participates in a covalent cross-link: Glycyl lysine isopeptide (Lys-Gly) (interchain with G-Cter in SUMO2). The interval 271 to 297 (KQETSEEMEQSGEASGKPNRECAPQIP) is disordered. Ser360 is modified (phosphoserine).

The polypeptide is PiggyBac transposable element-derived protein 1 (PGBD1) (Homo sapiens (Human)).